The following is an 874-amino-acid chain: Alanine--tRNA ligase (874 aa).

Zn(2+) contacts are provided by His562, His566, Cys665, and His669.

This sequence belongs to the class-II aminoacyl-tRNA synthetase family. It depends on Zn(2+) as a cofactor.

It localises to the cytoplasm. The catalysed reaction is tRNA(Ala) + L-alanine + ATP = L-alanyl-tRNA(Ala) + AMP + diphosphate. In terms of biological role, catalyzes the attachment of alanine to tRNA(Ala) in a two-step reaction: alanine is first activated by ATP to form Ala-AMP and then transferred to the acceptor end of tRNA(Ala). Also edits incorrectly charged Ser-tRNA(Ala) and Gly-tRNA(Ala) via its editing domain. The polypeptide is Alanine--tRNA ligase (Pseudomonas putida (strain GB-1)).